The sequence spans 87 residues: Small ribosomal subunit protein bS20 (87 aa).

Residues 1 to 26 (MANIKSAKKRAVQSEKRRKHNASRRS) form a disordered region.

This sequence belongs to the bacterial ribosomal protein bS20 family.

In terms of biological role, binds directly to 16S ribosomal RNA. The chain is Small ribosomal subunit protein bS20 from Yersinia enterocolitica serotype O:8 / biotype 1B (strain NCTC 13174 / 8081).